A 206-amino-acid polypeptide reads, in one-letter code: Probable chemoreceptor glutamine deamidase CheD 1 (206 aa).

This sequence belongs to the CheD family.

The catalysed reaction is L-glutaminyl-[protein] + H2O = L-glutamyl-[protein] + NH4(+). In terms of biological role, probably deamidates glutamine residues to glutamate on methyl-accepting chemotaxis receptors (MCPs), playing an important role in chemotaxis. This Shewanella oneidensis (strain ATCC 700550 / JCM 31522 / CIP 106686 / LMG 19005 / NCIMB 14063 / MR-1) protein is Probable chemoreceptor glutamine deamidase CheD 1.